Here is a 906-residue protein sequence, read N- to C-terminus: Ectonucleotide pyrophosphatase/phosphodiesterase family member 1 (906 aa).

Residues 1–22 are disordered; it reads MERDGDQAGHGPRHGSAGNGRE. Residues 1–58 lie on the Cytoplasmic side of the membrane; the sequence is MERDGDQAGHGPRHGSAGNGRELESPAAASLLAPMDLGEEPLEKAERARPAKDPNTYK. Residue Ser-25 is modified to Phosphoserine. Positions 27-34 match the Di-leucine motif motif; that stretch reads AAASLLAP. A helical; Signal-anchor for type II membrane protein transmembrane segment spans residues 59-79; sequence VLSLVLSVCVLTTILGCIFGL. Over 80–906 the chain is Extracellular; it reads KPSCAKEVKS…THLPIFSQED (827 aa). 2 consecutive SMB domains span residues 86–126 and 127–171; these read EVKS…VEPT and HIWT…DKKS. 10 disulfide bridges follow: Cys-90-Cys-104, Cys-94-Cys-122, Cys-102-Cys-115, Cys-108-Cys-114, Cys-131-Cys-148, Cys-136-Cys-166, Cys-146-Cys-159, Cys-152-Cys-158, Cys-177-Cys-223, and Cys-185-Cys-397. Asn-161 carries an N-linked (GlcNAc...) asparagine glycan. A phosphodiesterase region spans residues 173–573; that stretch reads VEETCESIDT…APNNGSHGSL (401 aa). AMP-binding residues include Asp-200, Thr-238, and Asn-259. Asp-200 and Thr-238 together coordinate Zn(2+). Thr-238 acts as the AMP-threonine intermediate in catalysis. Residues Thr-238 and Asn-259 each coordinate CMP. Thr-238 and Asn-259 together coordinate dTMP. Positions 238 and 259 each coordinate GMP. Thr-238 is modified (phosphothreonine). A glycan (N-linked (GlcNAc...) asparagine) is linked at Asn-267. The GMP site is built by Leu-272, Lys-277, and Tyr-322. AMP is bound by residues Lys-277 and Tyr-322. CMP is bound by residues Lys-277 and Tyr-322. Position 322 (Tyr-322) interacts with dTMP. Residue Asn-323 is glycosylated (N-linked (GlcNAc...) asparagine). Asp-358 lines the AMP pocket. Residues Asp-358, His-362, Asp-405, and His-406 each contribute to the Zn(2+) site. Position 358 (Asp-358) interacts with CMP. Position 358 (Asp-358) interacts with dTMP. Asp-358 contributes to the GMP binding site. His-362 is a binding site for 2',3'-cGAMP. AMP is bound at residue His-406. His-406 contacts CMP. His-406 contacts dTMP. Residue His-406 participates in GMP binding. 6 disulfides stabilise this stretch: Cys-413–Cys-512, Cys-462–Cys-849, Cys-596–Cys-653, Cys-607–Cys-707, Cys-609–Cys-692, and Cys-819–Cys-829. The N-linked (GlcNAc...) asparagine glycan is linked to Asn-459. Ser-514 contacts 2',3'-cGAMP. Residue His-517 coordinates AMP. A Zn(2+)-binding site is contributed by His-517. His-517 serves as a coordination point for CMP. Residue His-517 coordinates dTMP. His-517 lines the GMP pocket. N-linked (GlcNAc...) asparagine glycosylation is found at Asn-567 and Asn-624. The linker stretch occupies residues 579–628; sequence KPIYNPSHPKEEGFLSQCPIKSTSNDLGCTCDPWIVPIKDFEKQLNLTTE. The segment at 635-906 is nuclease-like domain; it reads HMTVPYGRPR…THLPIFSQED (272 aa). Positions 781, 783, 785, 787, and 789 each coordinate Ca(2+).

It belongs to the nucleotide pyrophosphatase/phosphodiesterase family. In terms of assembly, ectonucleotide pyrophosphatase/phosphodiesterase family member 1: Homodimer. Ectonucleotide pyrophosphatase/phosphodiesterase family member 1: Interacts with INSR; leading to inhibit INSR autophosphorylation and subsequent activation of INSR kinase activity. Ectonucleotide pyrophosphatase/phosphodiesterase family member 1, secreted form: Monomeric. Zn(2+) serves as cofactor. Post-translationally, N-glycosylated. In terms of processing, the secreted form is produced through cleavage at Lys-85 by intracellular processing. Selectively expressed on the surface of antibody-secreting cells. Expressed in osteocytes and osteoclasts.

It localises to the cell membrane. Its subcellular location is the basolateral cell membrane. It is found in the secreted. It carries out the reaction Hydrolytically removes 5'-nucleotides successively from the 3'-hydroxy termini of 3'-hydroxy-terminated oligonucleotides.. It catalyses the reaction a ribonucleoside 5'-triphosphate + H2O = a ribonucleoside 5'-phosphate + diphosphate + H(+). The catalysed reaction is ATP + H2O = AMP + diphosphate + H(+). The enzyme catalyses UTP + H2O = UMP + diphosphate + H(+). It carries out the reaction GTP + H2O = GMP + diphosphate + H(+). It catalyses the reaction CTP + H2O = CMP + diphosphate + H(+). The catalysed reaction is 2',3'-cGAMP + 2 H2O = GMP + AMP + 2 H(+). The enzyme catalyses P(1),P(4)-bis(5'-adenosyl) tetraphosphate + H2O = AMP + ATP + 2 H(+). It carries out the reaction 3',5'-cyclic AMP + H2O = AMP + H(+). Its activity is regulated as follows. At low concentrations of ATP, a phosphorylated intermediate is formed which inhibits further hydrolysis. In terms of biological role, nucleotide pyrophosphatase that generates diphosphate (PPi) and functions in bone mineralization and soft tissue calcification by regulating pyrophosphate levels. PPi inhibits bone mineralization and soft tissue calcification by binding to nascent hydroxyapatite crystals, thereby preventing further growth of these crystals. Preferentially hydrolyzes ATP, but can also hydrolyze other nucleoside 5' triphosphates such as GTP, CTP and UTP to their corresponding monophosphates with release of pyrophosphate, as well as diadenosine polyphosphates, and also 3',5'-cAMP to AMP. May also be involved in the regulation of the availability of nucleotide sugars in the endoplasmic reticulum and Golgi, and the regulation of purinergic signaling. Inhibits ectopic joint calcification and maintains articular chondrocytes by repressing hedgehog signaling; it is however unclear whether hedgehog inhibition is direct or indirect. Appears to modulate insulin sensitivity. Also involved in melanogenesis. Also able to hydrolyze 2',3'-cGAMP (cyclic GMP-AMP), a second messenger that activates TMEM173/STING and triggers type-I interferon production. 2',3'-cGAMP degradation takes place in the lumen or extracellular space, and not in the cytosol where it is produced; the role of 2',3'-cGAMP hydrolysis is therefore unclear. Not able to hydrolyze the 2',3'-cGAMP linkage isomer 3',3'-cGAMP. This Mus musculus (Mouse) protein is Ectonucleotide pyrophosphatase/phosphodiesterase family member 1.